Reading from the N-terminus, the 40-residue chain is Alpha-conotoxin GIC (40 aa).

The propeptide occupies 1–20; that stretch reads SDGRNDAAKAFDLISSTVKK. 2 cysteine pairs are disulfide-bonded: cysteine 22/cysteine 28 and cysteine 23/cysteine 36. The segment at 24–26 is ser-Xaa-Pro motif, crucial for potent interaction with nAChR; the sequence is SHP. At cysteine 36 the chain carries Cysteine amide.

As to expression, expressed by the venom duct.

The protein resides in the secreted. Alpha-conotoxins bind to the nicotinic acetylcholine receptors (nAChR) and inhibit them. This toxin reversibly blocks neuronal nAChRs (alpha-3/beta-2 = alpha-6 or -3/beta-2 or -3 &gt; alpha-3/beta-4 = alpha-4/beta-2). The chain is Alpha-conotoxin GIC from Conus geographus (Geography cone).